Here is a 354-residue protein sequence, read N- to C-terminus: NADH-quinone oxidoreductase subunit H (354 aa).

Helical transmembrane passes span 25–45, 91–111, 126–146, 170–190, 205–225, 257–277, 290–310, and 330–350; these read LVRI…LILW, WVYL…WAVI, LLYA…AGWA, MGFA…SDIV, FLSW…VSGI, LFFL…SILF, FIPG…VFIW, and VFLP…MSPL.

It belongs to the complex I subunit 1 family. In terms of assembly, NDH-1 is composed of 14 different subunits. Subunits NuoA, H, J, K, L, M, N constitute the membrane sector of the complex.

The protein localises to the cell inner membrane. It carries out the reaction a quinone + NADH + 5 H(+)(in) = a quinol + NAD(+) + 4 H(+)(out). In terms of biological role, NDH-1 shuttles electrons from NADH, via FMN and iron-sulfur (Fe-S) centers, to quinones in the respiratory chain. The immediate electron acceptor for the enzyme in this species is believed to be ubiquinone. Couples the redox reaction to proton translocation (for every two electrons transferred, four hydrogen ions are translocated across the cytoplasmic membrane), and thus conserves the redox energy in a proton gradient. This subunit may bind ubiquinone. The protein is NADH-quinone oxidoreductase subunit H of Paraburkholderia phymatum (strain DSM 17167 / CIP 108236 / LMG 21445 / STM815) (Burkholderia phymatum).